The primary structure comprises 239 residues: Pyridoxine 5'-phosphate synthase (239 aa).

A 3-amino-2-oxopropyl phosphate-binding site is contributed by N7. 9 to 10 (DH) lines the 1-deoxy-D-xylulose 5-phosphate pocket. R18 lines the 3-amino-2-oxopropyl phosphate pocket. H43 acts as the Proton acceptor in catalysis. 1-deoxy-D-xylulose 5-phosphate-binding residues include R45 and H50. The Proton acceptor role is filled by E70. T100 contacts 1-deoxy-D-xylulose 5-phosphate. H191 serves as the catalytic Proton donor. Residues G192 and 213-214 (GH) contribute to the 3-amino-2-oxopropyl phosphate site.

This sequence belongs to the PNP synthase family. As to quaternary structure, homooctamer; tetramer of dimers.

Its subcellular location is the cytoplasm. The catalysed reaction is 3-amino-2-oxopropyl phosphate + 1-deoxy-D-xylulose 5-phosphate = pyridoxine 5'-phosphate + phosphate + 2 H2O + H(+). Its pathway is cofactor biosynthesis; pyridoxine 5'-phosphate biosynthesis; pyridoxine 5'-phosphate from D-erythrose 4-phosphate: step 5/5. Its function is as follows. Catalyzes the complicated ring closure reaction between the two acyclic compounds 1-deoxy-D-xylulose-5-phosphate (DXP) and 3-amino-2-oxopropyl phosphate (1-amino-acetone-3-phosphate or AAP) to form pyridoxine 5'-phosphate (PNP) and inorganic phosphate. The polypeptide is Pyridoxine 5'-phosphate synthase (Geobacter metallireducens (strain ATCC 53774 / DSM 7210 / GS-15)).